The chain runs to 292 residues: 33 kDa chaperonin (292 aa).

Disulfide bonds link Cys230–Cys232 and Cys263–Cys266.

This sequence belongs to the HSP33 family. Post-translationally, under oxidizing conditions two disulfide bonds are formed involving the reactive cysteines. Under reducing conditions zinc is bound to the reactive cysteines and the protein is inactive.

It localises to the cytoplasm. In terms of biological role, redox regulated molecular chaperone. Protects both thermally unfolding and oxidatively damaged proteins from irreversible aggregation. Plays an important role in the bacterial defense system toward oxidative stress. The chain is 33 kDa chaperonin from Escherichia coli O17:K52:H18 (strain UMN026 / ExPEC).